The sequence spans 191 residues: Fe/S biogenesis protein NfuA (191 aa).

2 residues coordinate [4Fe-4S] cluster: C149 and C152.

Belongs to the NfuA family. In terms of assembly, homodimer. [4Fe-4S] cluster serves as cofactor.

Involved in iron-sulfur cluster biogenesis. Binds a 4Fe-4S cluster, can transfer this cluster to apoproteins, and thereby intervenes in the maturation of Fe/S proteins. Could also act as a scaffold/chaperone for damaged Fe/S proteins. The polypeptide is Fe/S biogenesis protein NfuA (Salmonella typhi).